Here is an 89-residue protein sequence, read N- to C-terminus: Large ribosomal subunit protein bL27 (89 aa).

The segment at 1–23 is disordered; the sequence is MAHKKAGGSSRNGRDSAGKRLGI.

It belongs to the bacterial ribosomal protein bL27 family.

The chain is Large ribosomal subunit protein bL27 from Rhodopseudomonas palustris (strain BisA53).